The sequence spans 671 residues: Probable potassium transport system protein Kup (671 aa).

Residues 1-43 (MSQIPSPNDPASTGAAPSSAAVPAGPSATPAPSPTAGFSLPGH) are disordered. The segment covering 10–37 (PASTGAAPSSAAVPAGPSATPAPSPTAG) has biased composition (low complexity). 12 helical membrane passes run 52–72 (LAAL…TSPL), 92–112 (VLGV…FKYM), 147–167 (LMLG…TPAI), 181–201 (PAME…LFLF), 209–229 (VGAV…VLGV), 255–275 (GWHG…GEAL), 291–311 (WLGL…ALLL), 323–343 (LLAP…AAIV), 381–401 (IYLP…VLGF), 407–427 (LASA…LLFH), 441–461 (AWPL…ANVV), and 465–485 (DGGW…STWK).

Belongs to the HAK/KUP transporter (TC 2.A.72) family.

The protein resides in the cell inner membrane. It catalyses the reaction K(+)(in) + H(+)(in) = K(+)(out) + H(+)(out). Functionally, transport of potassium into the cell. Likely operates as a K(+):H(+) symporter. The protein is Probable potassium transport system protein Kup of Anaeromyxobacter dehalogenans (strain 2CP-1 / ATCC BAA-258).